Here is a 760-residue protein sequence, read N- to C-terminus: MDELVTTQSFTATVTGSPRIGPRRELKRATEGYWAKRTSRSELESVASTLRRDMWSDLAAAGLDSVPVNTFSYYDQMLDTAFMLGALPARVAQVSDDLDQYFALARGNNDIKPLEMTKWFDTNYHYLVPEIEPATTFSLNPGKILGELKEALEQRIPSRPVIIGPVTFLLLSKGINGGGAPIQRLEELVGIYCTLLSLLAENGARWVQFDEPALVTDLSPDAPALAEAVYTALGSVSKRPAIYVATYFGNPGASLAGLARTPIEAIGVDFVCGADTSVAAVPELAGKTLVAGIVDGRNIWRTDLESALSKLATLLGSAATVAVSTSCSTLHVPYSLEPETDLDDNLRSWLAFGAEKVAEVVVLARALRDGRDAVADEIAASNAAVASRRSDPRLHNGQVRARIDSIVASGTHRGDAAQRRTSQDARLHLPPLPTTTIGSYPQTSAIRKARAALQDAEIDEAEYISRMKKEVADAIKLQEQLGLDVLVHGEPERNDMVQYFAEQLGGFFATQNGWVQSYGSRCVRPPILYGDVSRPHPMTIEWITYAQSLTDKPVKGMLTGPVTILAWSFVRDDQPLADTANQVALAIRDETVDLQSAGIAIIQVDEPALRELLPLRRADQDEYLCWAVKAFRLATSGVADSTQIHTHLCYSEFGEVIGAIADLDADVTSIEAARSHMEVLDDLNAVGFANSIGPGVYDIHSPRVPSTDEIAKSLRAALKAIPMQRLWVNPDCGLKTRSVDEVSASLQNMVAAARQVRAGA.

5-methyltetrahydropteroyltri-L-glutamate contacts are provided by residues 24–27 and Lys118; that span reads RELK. L-homocysteine is bound by residues 437-439 and Glu490; that span reads IGS. Residues 437 to 439 and Glu490 each bind L-methionine; that span reads IGS. 5-methyltetrahydropteroyltri-L-glutamate is bound by residues 521 to 522 and Trp567; that span reads RC. Asp605 lines the L-homocysteine pocket. L-methionine is bound at residue Asp605. Glu611 contacts 5-methyltetrahydropteroyltri-L-glutamate. Zn(2+)-binding residues include His647, Cys649, and Glu671. The Proton donor role is filled by His700. Residue Cys732 participates in Zn(2+) binding.

This sequence belongs to the vitamin-B12 independent methionine synthase family. It depends on Zn(2+) as a cofactor.

It carries out the reaction 5-methyltetrahydropteroyltri-L-glutamate + L-homocysteine = tetrahydropteroyltri-L-glutamate + L-methionine. Its pathway is amino-acid biosynthesis; L-methionine biosynthesis via de novo pathway; L-methionine from L-homocysteine (MetE route): step 1/1. Its function is as follows. Catalyzes the transfer of a methyl group from 5-methyltetrahydrofolate to homocysteine resulting in methionine formation. This chain is 5-methyltetrahydropteroyltriglutamate--homocysteine methyltransferase, found in Mycobacterium leprae (strain TN).